Consider the following 308-residue polypeptide: Nuclear transcription factor Y subunit A-5 (308 aa).

Residues 1-10 show a composition bias toward basic and acidic residues; it reads MQVFQRKEDS. Disordered stretches follow at residues 1–26 and 49–71; these read MQVF…IQGS and GLQL…GGGE. The span at 11-26 shows a compositional bias: polar residues; the sequence is SWGNSMPTTNSNIQGS. The Subunit association domain (SAD) signature appears at 181 to 204; sequence FVNAKQYHAILRRRKHRAKLEAQN. A DNA-binding region (NFYA/HAP2-type) is located at residues 211–236; sequence KPYLHESRHLHALKRARGSGGRFLNT. Residues 251 to 273 are disordered; it reads MANGQNFSMSPHGGGSGIGSSSI.

It belongs to the NFYA/HAP2 subunit family. Heterotrimeric transcription factor composed of three components, NF-YA, NF-YB and NF-YC. NF-YB and NF-YC must interact and dimerize for NF-YA association and DNA binding. As to expression, expressed in the whole plant, except roots. Present in etiolated seedlings.

The protein resides in the nucleus. In terms of biological role, stimulates the transcription of various genes by recognizing and binding to a CCAAT motif in promoters. Involved in the blue light (BL) and abscisic acid (ABA) signaling pathways. This is Nuclear transcription factor Y subunit A-5 (NFYA5) from Arabidopsis thaliana (Mouse-ear cress).